The chain runs to 568 residues: Sulfate adenylyltransferase (568 aa).

Residues 1 to 162 are N-terminal; that stretch reads MANSPHGGVL…IEAVNKLNHY (162 aa). Positions 163–388 are catalytic; sequence DYVALRYSPA…LRESSPPRAT (226 aa). A sulfate-binding site is contributed by glutamine 190. ATP-binding positions include 190–193 and 284–287; these read QTRN and GRDH. Residues threonine 191, arginine 192, and asparagine 193 contribute to the active site. Arginine 192 lines the sulfate pocket. Alanine 288 contacts sulfate. Valine 326 contacts ATP. Positions 389–568 are allosteric regulation domain; adenylyl-sulfate kinase-like; sequence QGFTIFLTGY…LESEGYFDRL (180 aa). 3'-phosphoadenylyl sulfate-binding positions include 428 to 431, arginine 445, 471 to 472, and arginine 510; these read DTVR and IA.

It in the N-terminal section; belongs to the sulfate adenylyltransferase family. In the C-terminal section; belongs to the APS kinase family. In terms of assembly, homohexamer. Dimer of trimers.

The protein resides in the cytoplasm. It carries out the reaction sulfate + ATP + H(+) = adenosine 5'-phosphosulfate + diphosphate. It participates in sulfur metabolism; hydrogen sulfide biosynthesis; sulfite from sulfate: step 1/3. Its activity is regulated as follows. Allosterically inhibited by 3'-phosphoadenosine 5'-phosphosulfate (PAPS). In terms of biological role, catalyzes the first intracellular reaction of sulfate assimilation, forming adenosine-5'-phosphosulfate (APS) from inorganic sulfate and ATP. Plays an important role in sulfate activation as a component of the biosynthesis pathway of sulfur-containing amino acids. This chain is Sulfate adenylyltransferase, found in Aspergillus terreus.